Here is a 349-residue protein sequence, read N- to C-terminus: tRNA pseudouridine synthase D (349 aa).

A substrate-binding site is contributed by Phe-27. Catalysis depends on Asp-80, which acts as the Nucleophile. Residue Asn-129 coordinates substrate. The 149-residue stretch at 155 to 303 (GVPNYFGAQR…VEAARRAMLL (149 aa)) folds into the TRUD domain. Phe-329 provides a ligand contact to substrate.

This sequence belongs to the pseudouridine synthase TruD family.

The enzyme catalyses uridine(13) in tRNA = pseudouridine(13) in tRNA. Responsible for synthesis of pseudouridine from uracil-13 in transfer RNAs. This is tRNA pseudouridine synthase D from Escherichia coli O17:K52:H18 (strain UMN026 / ExPEC).